Here is a 427-residue protein sequence, read N- to C-terminus: UBX domain-containing protein 10 (427 aa).

The stretch at 247-311 forms a coiled coil; sequence LERFRSEREA…VQKKKKQYRA (65 aa). Residues 323 to 425 form the UBX domain; it reads SEDEPARLSI…FPNGTVVVEL (103 aa).

Its subcellular location is the endoplasmic reticulum. In terms of biological role, involved in protein degradation through the ubiquitin/proteasome pathway. The chain is UBX domain-containing protein 10 (ucp10) from Schizosaccharomyces pombe (strain 972 / ATCC 24843) (Fission yeast).